The following is a 790-amino-acid chain: Potassium transporter 22 (790 aa).

At 1-64 the chain is on the cytoplasmic side; sequence MAQQQGQGAG…HGEGWARTLR (64 aa). The chain crosses the membrane as a helical span at residues 65–85; the sequence is LAFQCFGVLYGDIGTSPLYVY. Over 86–98 the chain is Extracellular; sequence STTFDGGIRHTDD. The chain crosses the membrane as a helical span at residues 99–119; that stretch reads LLGVLSLIIYSFLLFTIIKYV. The Cytoplasmic segment spans residues 120 to 198; it reads YIALRANDDG…DLLENSRPVR (79 aa). A helical transmembrane segment spans residues 199 to 219; it reads ISLFLLTILATAMVISDACLT. Over 220–236 the chain is Extracellular; it reads PAISVLSAVGGLKDKAP. A helical transmembrane segment spans residues 237-257; it reads HLNTEQVVWVTVGILVMLFAV. Residues 258-264 lie on the Cytoplasmic side of the membrane; it reads QRFGTDK. The chain crosses the membrane as a helical span at residues 265–285; sequence VGYLFAPVVLLWLLLIGGVGV. The Extracellular portion of the chain corresponds to 286–318; that stretch reads YNLAAHDVGVLRAFNPKYILDYFRRNGRHGWVS. The helical transmembrane segment at 319 to 339 threads the bilayer; that stretch reads LGGVLLCFTGTEALFADLGCF. The Cytoplasmic segment spans residues 340–345; the sequence is SIRSIQ. The helical transmembrane segment at 346 to 366 threads the bilayer; the sequence is LSFAFGLVPAVLLAYAGQAAY. The Extracellular segment spans residues 367 to 385; the sequence is LRVYPDHVGDAFYASTPQV. Residues 386-406 traverse the membrane as a helical segment; the sequence is LFWPTLVLALAASVVGSQAMI. Over 407–437 the chain is Cytoplasmic; that stretch reads SCAFATISHSQAMGCFPRVKVVHTSRQYQGQ. The helical transmembrane segment at 438 to 458 threads the bilayer; that stretch reads VYIPEINLLLGAAACVVTVAA. Over 459-469 the chain is Extracellular; sequence RDTVVIGEAHG. A helical membrane pass occupies residues 470–490; that stretch reads ICVVLVMLITTLLLTVVMVLV. The Cytoplasmic segment spans residues 491-492; it reads WR. A helical transmembrane segment spans residues 493–513; the sequence is VNIGWVLVFACVFASTESVYL. The Extracellular portion of the chain corresponds to 514 to 519; that stretch reads TSVLYK. Residues 520–540 traverse the membrane as a helical segment; it reads FAHGGYIPVAMSAVLMGVMGV. Residues 541-790 are Cytoplasmic-facing; the sequence is WHYVHVRRYK…LLKVGMSYEI (250 aa).

Belongs to the HAK/KUP transporter (TC 2.A.72.3) family.

It is found in the membrane. Its function is as follows. High-affinity potassium transporter. The protein is Potassium transporter 22 (HAK22) of Oryza sativa subsp. japonica (Rice).